Here is a 1128-residue protein sequence, read N- to C-terminus: Cordon-bleu protein-like 1 (1128 aa).

A disordered region spans residues 1 to 35 (MDGRTPRPQDAPARRKPKAKAPLPPAETKYTDVSS). Phosphothreonine is present on T139. A phosphoserine mark is found at S204, S222, and S256. Disordered stretches follow at residues 249–309 (KKRD…VPQD), 325–441 (MSVD…SPKS), and 454–499 (TLKN…TSNG). A Phosphothreonine modification is found at T260. Polar residues predominate over residues 270–286 (FTRSNTISKPYISNTLP). S273 carries the phosphoserine modification. Phosphothreonine is present on T284. A KKRRAP 1 motif is present at residues 291–296 (KKRRAP). 4 positions are modified to phosphoserine: S326, S333, S344, and S356. The span at 345–357 (LQLSSMSAGNSSL) shows a compositional bias: polar residues. The KKRRAP 2 signature appears at 360–365 (TKRKAP). Polar residues predominate over residues 397-415 (SEANSPEELSSPAGISSDY). Residues 416 to 425 (SLEEIDEKEE) are compositionally biased toward acidic residues. Phosphoserine is present on residues S438, S441, S461, S471, and S474. The segment covering 475–488 (MEEKQETKSTDGQE) has biased composition (basic and acidic residues). Phosphoserine is present on residues S563, S584, S786, S813, S814, and S821. Disordered regions lie at residues 780-840 (TEDS…PFAP), 882-964 (SAAA…SQVS), 995-1081 (RSQS…PEQM), and 1103-1128 (IPSN…QDGH). Residues 899-908 (LTNKEAERDM) are compositionally biased toward basic and acidic residues. Phosphoserine is present on residues S911, S917, S947, S1069, and S1070. Composition is skewed to polar residues over residues 1045–1081 (SAHN…PEQM) and 1103–1122 (IPSN…SMSP). The WH2 domain maps to 1081–1101 (MRQSLLTAIRSGEAAAKLKRV). Residue S1121 is modified to Phosphoserine.

The polypeptide is Cordon-bleu protein-like 1 (Homo sapiens (Human)).